The chain runs to 701 residues: MARTTPISRYRNIGIVAHVDAGKTTTTERVLFYTGKSHKMGEVHDGAATTDWMVQEQERGITITSAAITAFWKGSEKQYPHEHRFNVIDTPGHVDFTIEVERSLRVLDGAVVVFCGTSGVEPQSETVWRQANKYGVPRLVYVNKMDRAGANFLRVIGQIKQRLGHTPVPIQLAIGSEDNFQGQIDLINMQAVYWNDSDKGMVPVRKEIPADMLELAEEWRNNMVEAAAEASEELMNKYLEGEELSIAEIKAALRQRTIAGEIVLAVCGSSFKNKGVPLVLDAVIDFLPAPTDIPAIKGSNPDNEEEEMERHASDDEPFAALAFKIATDPFVGTLTFVRVYSGVLNSGDGVINSVKGKKERVGRMVQMHANAREEIKEVRAGDIAALIGMKDVTTGETLCNADKPIILVRMDFPEPVISVAVEPKTKDDQEKMGIALGKLAQEDPSFRVKTDEETGQTIISGMGELHLDILVDRMRREFNVEANIGKPQVSYRERITKNCEIEGKFVRQSGGRGQFGHCWIRFAPADEGQEGLQFLNEVVGGVVPKEYIPAIQKGIEEQMKNGVVAGYPLIGLKATVFDGSYHDVDSNEMAFKVAASMATKQLAQKGGGELLEPIMAVEVVTPEDYMGDVMGDLNRRRGMIQGMEDTVSGKVIRAEVPLGEMFGYATDVRSMSQGRASYSMEFKKYDTAPSHIVESVTKKQG.

The tr-type G domain maps to 8-291; sequence SRYRNIGIVA…AVIDFLPAPT (284 aa). Residues 17-24, 89-93, and 143-146 contribute to the GTP site; these read AHVDAGKT, DTPGH, and NKMD.

It belongs to the TRAFAC class translation factor GTPase superfamily. Classic translation factor GTPase family. EF-G/EF-2 subfamily.

Its subcellular location is the cytoplasm. Its function is as follows. Catalyzes the GTP-dependent ribosomal translocation step during translation elongation. During this step, the ribosome changes from the pre-translocational (PRE) to the post-translocational (POST) state as the newly formed A-site-bound peptidyl-tRNA and P-site-bound deacylated tRNA move to the P and E sites, respectively. Catalyzes the coordinated movement of the two tRNA molecules, the mRNA and conformational changes in the ribosome. The sequence is that of Elongation factor G from Pseudomonas fluorescens (strain Pf0-1).